The following is a 602-amino-acid chain: Aspartate--tRNA(Asp/Asn) ligase (602 aa).

Residue glutamate 175 participates in L-aspartate binding. The aspartate stretch occupies residues glutamine 199 to lysine 202. L-aspartate is bound at residue arginine 221. Residues arginine 221 to glutamate 223 and glutamine 230 each bind ATP. An L-aspartate-binding site is contributed by histidine 458. Position 492 (glutamate 492) interacts with ATP. Arginine 499 lines the L-aspartate pocket. Residue glycine 544 to arginine 547 coordinates ATP.

This sequence belongs to the class-II aminoacyl-tRNA synthetase family. Type 1 subfamily. As to quaternary structure, homodimer.

The protein localises to the cytoplasm. It carries out the reaction tRNA(Asx) + L-aspartate + ATP = L-aspartyl-tRNA(Asx) + AMP + diphosphate. Functionally, aspartyl-tRNA synthetase with relaxed tRNA specificity since it is able to aspartylate not only its cognate tRNA(Asp) but also tRNA(Asn). Reaction proceeds in two steps: L-aspartate is first activated by ATP to form Asp-AMP and then transferred to the acceptor end of tRNA(Asp/Asn). This chain is Aspartate--tRNA(Asp/Asn) ligase, found in Cupriavidus metallidurans (strain ATCC 43123 / DSM 2839 / NBRC 102507 / CH34) (Ralstonia metallidurans).